The chain runs to 177 residues: ADP-ribosylation factor-like protein 17 (177 aa).

The N-myristoyl glycine moiety is linked to residue Gly-2. GTP contacts are provided by residues 24 to 31 (SLDTAGKT), 67 to 71 (DVGSH), and 125 to 128 (LPHS).

The protein belongs to the small GTPase superfamily. Arf family.

The protein localises to the golgi apparatus. In terms of biological role, GTP-binding protein that functions as an allosteric activator of the cholera toxin catalytic subunit, an ADP-ribosyltransferase. Involved in protein trafficking; may modulate vesicle budding and uncoating within the Golgi apparatus. The chain is ADP-ribosylation factor-like protein 17 (ARL17A) from Homo sapiens (Human).